A 234-amino-acid chain; its full sequence is Adenosine 5'-phosphosulfate reductase (234 aa).

4 residues coordinate [4Fe-4S] cluster: C120, C121, C203, and C206. The active-site Nucleophile; cysteine thiosulfonate intermediate is C229.

Belongs to the PAPS reductase family. CysH subfamily. It depends on [4Fe-4S] cluster as a cofactor.

The protein localises to the cytoplasm. The catalysed reaction is [thioredoxin]-disulfide + sulfite + AMP + 2 H(+) = adenosine 5'-phosphosulfate + [thioredoxin]-dithiol. The protein operates within sulfur metabolism; hydrogen sulfide biosynthesis; sulfite from sulfate. Functionally, catalyzes the formation of sulfite from adenosine 5'-phosphosulfate (APS) using thioredoxin as an electron donor. The chain is Adenosine 5'-phosphosulfate reductase from Bacillus thuringiensis subsp. konkukian (strain 97-27).